Reading from the N-terminus, the 192-residue chain is Fe/S biogenesis protein NfuA (192 aa).

[4Fe-4S] cluster is bound by residues Cys150 and Cys153.

Belongs to the NfuA family. Homodimer. [4Fe-4S] cluster serves as cofactor.

Its function is as follows. Involved in iron-sulfur cluster biogenesis. Binds a 4Fe-4S cluster, can transfer this cluster to apoproteins, and thereby intervenes in the maturation of Fe/S proteins. Could also act as a scaffold/chaperone for damaged Fe/S proteins. The polypeptide is Fe/S biogenesis protein NfuA (Buchnera aphidicola subsp. Acyrthosiphon pisum (strain APS) (Acyrthosiphon pisum symbiotic bacterium)).